We begin with the raw amino-acid sequence, 104 residues long: Vesicle-associated membrane protein 3 (104 aa).

The disordered stretch occupies residues 1 to 23; sequence MTTNAPAGSSAAAGSSRRLQQTQ. Topologically, residues 1–81 are cytoplasmic; the sequence is MTTNAPAGSS…KRKYWWKNCK (81 aa). Positions 7–16 are enriched in low complexity; the sequence is AGSSAAAGSS. The 61-residue stretch at 18–78 folds into the v-SNARE coiled-coil homology domain; sequence RLQQTQNQVD…AKLKRKYWWK (61 aa). Residues lysine 70, lysine 72, and lysine 81 each participate in a glycyl lysine isopeptide (Lys-Gly) (interchain with G-Cter in ubiquitin) cross-link. Residues 82–102 form a helical; Anchor for type IV membrane protein membrane-spanning segment; that stretch reads MWAIGITVVVIIIIIIVVWSI. The Vesicular segment spans residues 103–104; that stretch reads SS.

Belongs to the synaptobrevin family. Interacts with POPDC1 (via the C-terminus cytoplasmic tail). Interacts with BCAP31; involved in VAMP3 export from the endoplasmic reticulum. Interacts with BAIAP3; this interaction is increased in the presence of calcium. Interacts with PICALM. Post-translationally, ubiquitinated by RNF167 at Lys-70, Lys-72 and Lys-81, regulating the recycling endosome pathway.

It is found in the early endosome membrane. The protein localises to the recycling endosome membrane. Its subcellular location is the synapse. The protein resides in the synaptosome. Its function is as follows. SNARE involved in vesicular transport from the late endosomes to the trans-Golgi network. This chain is Vesicle-associated membrane protein 3 (VAMP3), found in Bos taurus (Bovine).